A 715-amino-acid polypeptide reads, in one-letter code: L-type lectin-domain containing receptor kinase VIII.1 (715 aa).

The first 21 residues, methionine 1–threonine 21, serve as a signal peptide directing secretion. Residues threonine 22 to serine 247 are legume-lectin like. At threonine 22–threonine 317 the chain is on the extracellular side. N-linked (GlcNAc...) asparagine glycans are attached at residues asparagine 126 and asparagine 195. The tract at residues glycine 255 to threonine 296 is disordered. Residues serine 283–threonine 296 are compositionally biased toward low complexity. The chain crosses the membrane as a helical span at residues isoleucine 318 to tryptophan 338. Topologically, residues valine 339–valine 715 are cytoplasmic. The Protein kinase domain occupies phenylalanine 376 to leucine 676. ATP-binding positions include isoleucine 382–valine 390 and lysine 405. The active-site Proton acceptor is the aspartate 500.

It in the C-terminal section; belongs to the protein kinase superfamily. Ser/Thr protein kinase family. In the N-terminal section; belongs to the leguminous lectin family.

The protein localises to the cell membrane. The enzyme catalyses L-seryl-[protein] + ATP = O-phospho-L-seryl-[protein] + ADP + H(+). It catalyses the reaction L-threonyl-[protein] + ATP = O-phospho-L-threonyl-[protein] + ADP + H(+). The sequence is that of L-type lectin-domain containing receptor kinase VIII.1 (LECRK81) from Arabidopsis thaliana (Mouse-ear cress).